We begin with the raw amino-acid sequence, 517 residues long: Cytochrome P450 78A5 (517 aa).

The helical transmembrane segment at 20-40 (AFASVSLIIATVAFLLSPGGL) threads the bilayer. A heme-binding site is contributed by Cys459.

Belongs to the cytochrome P450 family. Requires heme as cofactor. Expressed in the periphery of the shoot apical meristem and inflorescence meristem, on the adaxial sides of developing floral organs and in developing ovules in the region where the integuments emerge.

Its subcellular location is the membrane. Plays a role in regulating directional growth at the meristem/organ boundary. Is required for the promotion of leaf and floral organ growth and for the prolongation of the plastochron. Promotes organ growth in a non-cell-autonomous manner and may generate a mobile growth signal distinct from the classical phytohormones that prevents premature arrest of proliferation, until the correct primordium size has been reached. Functions probably in association with CYP78A7 in regulating relative growth of the shoot apical meristem and plant organs. Is required locally in developing ovules to stimulates cell proliferation and promote seed growth. This chain is Cytochrome P450 78A5 (CYP78A5), found in Arabidopsis thaliana (Mouse-ear cress).